Consider the following 452-residue polypeptide: CCA-adding enzyme (452 aa).

Residues Ser-54 and Arg-57 each coordinate ATP. Residues Ser-54 and Arg-57 each contribute to the CTP site. The Mg(2+) site is built by Asp-66, Asp-68, and Asp-117. 3 residues coordinate ATP: His-140, Lys-160, and Tyr-169. CTP is bound by residues His-140, Lys-160, and Tyr-169.

It belongs to the tRNA nucleotidyltransferase/poly(A) polymerase family. Archaeal CCA-adding enzyme subfamily. Homodimer. It depends on Mg(2+) as a cofactor.

The catalysed reaction is a tRNA precursor + 2 CTP + ATP = a tRNA with a 3' CCA end + 3 diphosphate. It catalyses the reaction a tRNA with a 3' CCA end + 2 CTP + ATP = a tRNA with a 3' CCACCA end + 3 diphosphate. Functionally, catalyzes the addition and repair of the essential 3'-terminal CCA sequence in tRNAs without using a nucleic acid template. Adds these three nucleotides in the order of C, C, and A to the tRNA nucleotide-73, using CTP and ATP as substrates and producing inorganic pyrophosphate. tRNA 3'-terminal CCA addition is required both for tRNA processing and repair. Also involved in tRNA surveillance by mediating tandem CCA addition to generate a CCACCA at the 3' terminus of unstable tRNAs. While stable tRNAs receive only 3'-terminal CCA, unstable tRNAs are marked with CCACCA and rapidly degraded. The sequence is that of CCA-adding enzyme from Halobacterium salinarum (strain ATCC 29341 / DSM 671 / R1).